A 257-amino-acid chain; its full sequence is Pantothenate synthetase (257 aa).

Position 29 to 36 (29 to 36 (MGNLHAGH)) interacts with ATP. The active-site Proton donor is the histidine 36. Residue glutamine 60 participates in (R)-pantoate binding. Residue glutamine 60 coordinates beta-alanine. 145-148 (GEKD) provides a ligand contact to ATP. A (R)-pantoate-binding site is contributed by glutamine 151. ATP-binding positions include valine 174 and 182 to 185 (LSSR).

Belongs to the pantothenate synthetase family. In terms of assembly, homodimer.

Its subcellular location is the cytoplasm. It carries out the reaction (R)-pantoate + beta-alanine + ATP = (R)-pantothenate + AMP + diphosphate + H(+). The protein operates within cofactor biosynthesis; (R)-pantothenate biosynthesis; (R)-pantothenate from (R)-pantoate and beta-alanine: step 1/1. In terms of biological role, catalyzes the condensation of pantoate with beta-alanine in an ATP-dependent reaction via a pantoyl-adenylate intermediate. The protein is Pantothenate synthetase of Coxiella burnetii (strain CbuK_Q154) (Coxiella burnetii (strain Q154)).